The following is a 299-amino-acid chain: tRNA dimethylallyltransferase (299 aa).

11–18 (GPTAVGKT) serves as a coordination point for ATP. 13–18 (TAVGKT) is a substrate binding site. An interaction with substrate tRNA region spans residues 36–39 (DSQQ).

Belongs to the IPP transferase family. Monomer. Mg(2+) serves as cofactor.

The catalysed reaction is adenosine(37) in tRNA + dimethylallyl diphosphate = N(6)-dimethylallyladenosine(37) in tRNA + diphosphate. Its function is as follows. Catalyzes the transfer of a dimethylallyl group onto the adenine at position 37 in tRNAs that read codons beginning with uridine, leading to the formation of N6-(dimethylallyl)adenosine (i(6)A). This is tRNA dimethylallyltransferase from Streptococcus pyogenes serotype M28 (strain MGAS6180).